Reading from the N-terminus, the 131-residue chain is MLSFEGKVSSGLQKAGQFMEKEVYKKQYLDKLGFIPYHGTLNIKLSNNITLNLDNLHDKLKRIHGNGSFGDVLFLEAYLSTIDEKITKKGAILFPVKTVYDTDTLEYVSSEKLRDTLNLKDGDKVIIKIEK.

11 to 16 contributes to the CDP binding site; sequence GLQKAG. Mg(2+) is bound by residues T40 and N42. Residues T98 and E106 each coordinate FMN. A CDP-binding site is contributed by 111–114; sequence EKLR.

The protein belongs to the archaeal riboflavin kinase family. Mg(2+) serves as cofactor.

It carries out the reaction riboflavin + CTP = CDP + FMN + H(+). It participates in cofactor biosynthesis; FMN biosynthesis; FMN from riboflavin (CTP route): step 1/1. In terms of biological role, catalyzes the CTP-dependent phosphorylation of riboflavin (vitamin B2) to form flavin mononucleotide (FMN). The sequence is that of Riboflavin kinase from Methanosphaera stadtmanae (strain ATCC 43021 / DSM 3091 / JCM 11832 / MCB-3).